The sequence spans 93 residues: Large ribosomal subunit protein uL23 (93 aa).

The protein belongs to the universal ribosomal protein uL23 family. In terms of assembly, part of the 50S ribosomal subunit. Contacts protein L29, and trigger factor when it is bound to the ribosome.

Its function is as follows. One of the early assembly proteins it binds 23S rRNA. One of the proteins that surrounds the polypeptide exit tunnel on the outside of the ribosome. Forms the main docking site for trigger factor binding to the ribosome. The sequence is that of Large ribosomal subunit protein uL23 from Campylobacter hominis (strain ATCC BAA-381 / DSM 21671 / CCUG 45161 / LMG 19568 / NCTC 13146 / CH001A).